Here is an 85-residue protein sequence, read N- to C-terminus: Beta-defensin 18 (85 aa).

The signal sequence occupies residues 1–23 (MQSTMKMFGIILMVIFSVSCGPS). 3 disulfide bridges follow: C39–C65, C46–C60, and C50–C66.

The protein belongs to the beta-defensin family.

The protein resides in the secreted. In terms of biological role, has antibacterial activity. In Mus musculus (Mouse), this protein is Beta-defensin 18 (Defb18).